We begin with the raw amino-acid sequence, 159 residues long: Ribosomal RNA large subunit methyltransferase H (159 aa).

S-adenosyl-L-methionine-binding positions include Leu-76, Gly-107, and 126–131; that span reads LSKLTM.

This sequence belongs to the RNA methyltransferase RlmH family. In terms of assembly, homodimer.

It localises to the cytoplasm. It carries out the reaction pseudouridine(1915) in 23S rRNA + S-adenosyl-L-methionine = N(3)-methylpseudouridine(1915) in 23S rRNA + S-adenosyl-L-homocysteine + H(+). Its function is as follows. Specifically methylates the pseudouridine at position 1915 (m3Psi1915) in 23S rRNA. The chain is Ribosomal RNA large subunit methyltransferase H from Acinetobacter baylyi (strain ATCC 33305 / BD413 / ADP1).